The primary structure comprises 117 residues: Large ribosomal subunit protein bL19 (117 aa).

Belongs to the bacterial ribosomal protein bL19 family.

Functionally, this protein is located at the 30S-50S ribosomal subunit interface and may play a role in the structure and function of the aminoacyl-tRNA binding site. The polypeptide is Large ribosomal subunit protein bL19 (Shewanella amazonensis (strain ATCC BAA-1098 / SB2B)).